We begin with the raw amino-acid sequence, 78 residues long: MSRVCQVTGKRPMSGNNRSHALNATKRRFLPNLHSHRFWVESEKRFVTLRVSVKGMRVIDKKGIDAVLAELRTRGEKY.

The segment at M1–A21 is disordered.

It belongs to the bacterial ribosomal protein bL28 family.

The protein is Large ribosomal subunit protein bL28 of Photorhabdus laumondii subsp. laumondii (strain DSM 15139 / CIP 105565 / TT01) (Photorhabdus luminescens subsp. laumondii).